The sequence spans 570 residues: Hydroxylamine reductase (570 aa).

The [4Fe-4S] cluster site is built by cysteine 5, cysteine 8, cysteine 17, and cysteine 23. Histidine 266, glutamate 290, cysteine 334, cysteine 425, cysteine 453, cysteine 478, glutamate 513, and lysine 515 together coordinate hybrid [4Fe-2O-2S] cluster. Cysteine 425 bears the Cysteine persulfide mark.

Belongs to the HCP family. [4Fe-4S] cluster serves as cofactor. The cofactor is hybrid [4Fe-2O-2S] cluster.

It is found in the cytoplasm. It catalyses the reaction A + NH4(+) + H2O = hydroxylamine + AH2 + H(+). In terms of biological role, catalyzes the reduction of hydroxylamine to form NH(3) and H(2)O. This chain is Hydroxylamine reductase, found in Clostridium botulinum (strain Okra / Type B1).